Reading from the N-terminus, the 428-residue chain is 3-phosphoshikimate 1-carboxyvinyltransferase (428 aa).

Positions 19, 20, and 24 each coordinate 3-phosphoshikimate. Position 19 (Lys-19) interacts with phosphoenolpyruvate. Phosphoenolpyruvate contacts are provided by Gly-91 and Arg-119. Residues Ser-164, Gln-166, Asp-312, and Lys-339 each contribute to the 3-phosphoshikimate site. Gln-166 provides a ligand contact to phosphoenolpyruvate. Asp-312 acts as the Proton acceptor in catalysis. Phosphoenolpyruvate is bound by residues Arg-343 and Arg-386.

It belongs to the EPSP synthase family. Monomer.

It localises to the cytoplasm. It catalyses the reaction 3-phosphoshikimate + phosphoenolpyruvate = 5-O-(1-carboxyvinyl)-3-phosphoshikimate + phosphate. Its pathway is metabolic intermediate biosynthesis; chorismate biosynthesis; chorismate from D-erythrose 4-phosphate and phosphoenolpyruvate: step 6/7. Its function is as follows. Catalyzes the transfer of the enolpyruvyl moiety of phosphoenolpyruvate (PEP) to the 5-hydroxyl of shikimate-3-phosphate (S3P) to produce enolpyruvyl shikimate-3-phosphate and inorganic phosphate. In Bacillus licheniformis (strain ATCC 14580 / DSM 13 / JCM 2505 / CCUG 7422 / NBRC 12200 / NCIMB 9375 / NCTC 10341 / NRRL NRS-1264 / Gibson 46), this protein is 3-phosphoshikimate 1-carboxyvinyltransferase.